Here is a 97-residue protein sequence, read N- to C-terminus: Co-chaperonin GroES (97 aa).

This sequence belongs to the GroES chaperonin family. In terms of assembly, heptamer of 7 subunits arranged in a ring. Interacts with the chaperonin GroEL.

Its subcellular location is the cytoplasm. In terms of biological role, together with the chaperonin GroEL, plays an essential role in assisting protein folding. The GroEL-GroES system forms a nano-cage that allows encapsulation of the non-native substrate proteins and provides a physical environment optimized to promote and accelerate protein folding. GroES binds to the apical surface of the GroEL ring, thereby capping the opening of the GroEL channel. In Pectobacterium carotovorum subsp. carotovorum (strain PC1), this protein is Co-chaperonin GroES.